The chain runs to 528 residues: Proteinaceous RNase P 2 (528 aa).

A compositionally biased stretch (basic and acidic residues) spans 1-16 (MAASDQHRSRRHDESS). Positions 1–28 (MAASDQHRSRRHDESSSRPNKKKKVSRN) are disordered. PPR repeat units follow at residues 29–64 (PETNLLFNLNSCSKSKDLSAALALYDAAITSSEVRL), 72–107 (LLYLCSASITDISLQYLAIDRGFEIFDRMVSSGISP), 108–142 (NEASVTSVARLAAAKGNGDYAFKVVKEFVSVGGVS), and 145–179 (RLRTYAPALLCFCEKLEAEKGYEVEEHMEAAGIAL). Positions 275–511 (VSSTGRCLSC…NEESSRTWMC (237 aa)) constitute a PRORP domain. The Zn(2+) site is built by Cys281 and Cys284. Mg(2+)-binding residues include Asp343, Asp421, Asp422, and Asp440. Residues His494 and Cys511 each coordinate Zn(2+).

The protein belongs to the PPR family. P subfamily. In terms of assembly, monomer; forms dimers in crystallo but monomers in solution. Mg(2+) is required as a cofactor.

The protein localises to the nucleus. It catalyses the reaction Endonucleolytic cleavage of RNA, removing 5'-extranucleotides from tRNA precursor.. In terms of biological role, endonuclease RNase P responsible for the 5' maturation of tRNA precursors. Preferentially binds precursor tRNAs containing short 5' leaders and 3' trailers. Also involved in the maturation of mRNA and small nucleolar RNA (snoRNA). This chain is Proteinaceous RNase P 2 (PRORP2), found in Arabidopsis thaliana (Mouse-ear cress).